A 1149-amino-acid polypeptide reads, in one-letter code: cGMP-specific 3',5'-cyclic phosphodiesterase (1149 aa).

2 stretches are compositionally biased toward low complexity: residues 1–19 (MHGTVSRSSSSSNMTDVSS) and 31–47 (ATSSSTAATTSASASSS). The segment at 1–175 (MHGTVSRSSS…STTASQQDVD (175 aa)) is disordered. The span at 48–59 (KPLTNGANKTAI) shows a compositional bias: polar residues. A compositionally biased stretch (low complexity) spans 60–85 (STAAGVTPGAAPGPGCAAIPASGSSG). Over residues 96 to 108 (QSNNNRPAGSNRS) the composition is skewed to polar residues. Over residues 132–158 (SSSSPSQSPSQSQSQSQASIQTQTSQQ) the composition is skewed to low complexity. 2 GAF domains span residues 278–430 (DIDV…GIGI) and 462–643 (NLEC…GLGI). In terms of domain architecture, PDEase spans 673-996 (SQDQTEKLTQ…RNWQDLAEKV (324 aa)). Residue H749 is the Proton donor of the active site. 4 residues coordinate a divalent metal cation: H753, H789, D790, and D900. 2 disordered regions span residues 1037–1066 (QQSQHGSEDSHTPEHQRSGSRLSMKKTGAL) and 1096–1149 (SHVS…CALL). Basic and acidic residues-rich tracts occupy residues 1042 to 1053 (GSEDSHTPEHQR) and 1096 to 1106 (SHVSEDMDDKS). A compositionally biased stretch (low complexity) spans 1115–1135 (ASGSMGRMSASSSTSSAGGQM). Residues 1139 to 1149 (SKKRSKLCALL) show a composition bias toward basic residues. Cysteine methyl ester is present on C1146. A lipid anchor (S-farnesyl cysteine) is attached at C1146. Positions 1147-1149 (ALL) are cleaved as a propeptide — removed in mature form.

This sequence belongs to the cyclic nucleotide phosphodiesterase family. In terms of assembly, interacts with PrBP. Requires a divalent metal cation as cofactor.

Its subcellular location is the cell membrane. The catalysed reaction is 3',5'-cyclic GMP + H2O = GMP + H(+). Its function is as follows. Has a role regulating cGMP transport in Malpighian tubule principal cells. The polypeptide is cGMP-specific 3',5'-cyclic phosphodiesterase (Drosophila yakuba (Fruit fly)).